Reading from the N-terminus, the 927-residue chain is Disks large homolog 1 (927 aa).

An L27 domain is found at 4-64; it reads RKQDTQRALT…FYEVTLLDNP (61 aa). 3 PDZ domains span residues 223-310, 318-405, and 466-547; these read EITL…RRRK, DIKL…AKPT, and KVVL…QYRP. An SH3 domain is found at 581 to 651; sequence KRSLYVRALF…PSKRRVEKKE (71 aa). The tract at residues 692–719 is disordered; that stretch reads DQSEMETSDVDQHVTSNASDSESSYRGQ. Residues 704–717 are compositionally biased toward polar residues; that stretch reads HVTSNASDSESSYR. In terms of domain architecture, Guanylate kinase-like spans 737–912; it reads SRPVIILGPT…IYNQIKQIIE (176 aa).

Belongs to the MAGUK family.

Its subcellular location is the cell membrane. The protein resides in the endoplasmic reticulum membrane. It localises to the cell junction. The protein localises to the cytoplasm. It is found in the apical cell membrane. Its function is as follows. Essential multidomain scaffolding protein required for normal development. Recruits channels, receptors and signaling molecules to discrete plasma membrane domains in polarized cells. Promotes epithelial cell layer barrier function via maintaining cell-cell adhesion. May play a role in adherens junction assembly, signal transduction and cell proliferation. The protein is Disks large homolog 1 (dlg1) of Xenopus tropicalis (Western clawed frog).